We begin with the raw amino-acid sequence, 369 residues long: Dual specificity protein phosphatase 1-A (369 aa).

Positions 21–138 (RAHKCLILDC…FSAQCPEFCT (118 aa)) constitute a Rhodanese domain. Phosphothreonine; by MAPK1 is present on T168. The Tyrosine-protein phosphatase domain maps to 175–316 (GPVEILPFLY…LLQFESQVLA (142 aa)). C260 serves as the catalytic Phosphocysteine intermediate.

The protein belongs to the protein-tyrosine phosphatase family. Non-receptor class dual specificity subfamily. Post-translationally, phosphorylated by MAPK1/ERK2 at Thr-168 and at one or more serine residues in a progesterone-dependent manner. Phosphorylation reduces its rate of degradation but does not seem to affect phosphatase activity. Expressed in XIK-2 kidney cells.

The protein localises to the nucleus. It catalyses the reaction O-phospho-L-seryl-[protein] + H2O = L-seryl-[protein] + phosphate. It carries out the reaction O-phospho-L-threonyl-[protein] + H2O = L-threonyl-[protein] + phosphate. The catalysed reaction is O-phospho-L-tyrosyl-[protein] + H2O = L-tyrosyl-[protein] + phosphate. In terms of biological role, dual specificity phosphatase that dephosphorylates MAP kinase MAPK1/ERK2 on both 'Thr-188' and 'Tyr-190', regulating its activity during the meiotic cell cycle. The sequence is that of Dual specificity protein phosphatase 1-A from Xenopus laevis (African clawed frog).